A 213-amino-acid polypeptide reads, in one-letter code: Large ribosomal subunit protein uL1 (213 aa).

The protein belongs to the universal ribosomal protein uL1 family. As to quaternary structure, part of the 50S ribosomal subunit.

In terms of biological role, binds directly to 23S rRNA. Probably involved in E site tRNA release. Protein L1 is also a translational repressor protein, it controls the translation of its operon by binding to its mRNA. The polypeptide is Large ribosomal subunit protein uL1 (Methanococcus maripaludis (strain DSM 14266 / JCM 13030 / NBRC 101832 / S2 / LL)).